The following is a 345-amino-acid chain: Homeobox-leucine zipper protein HOX16 (345 aa).

Residues 76 to 135 (LPEKKRRLTPEQVHLLERSFEEENKLEPERKTELARKLGLQPRQVAVWFQNRRARWKTKQ) constitute a DNA-binding region (homeobox). A leucine-zipper region spans residues 134–178 (KQLERDFDRLKASFDALRADHDALLQDNHRLHSQVMSLTEKLQEK). The interval 220–241 (FEEQQEQQVKAEDRLSTGSGGS) is disordered.

The protein belongs to the HD-ZIP homeobox family. Class I subfamily. Expressed in seedlings, stems, leaf sheaths and blades and panicles.

The protein resides in the nucleus. Probable transcription factor. The protein is Homeobox-leucine zipper protein HOX16 (HOX16) of Oryza sativa subsp. indica (Rice).